We begin with the raw amino-acid sequence, 950 residues long: Glycine dehydrogenase (decarboxylating) (950 aa).

K698 carries the post-translational modification N6-(pyridoxal phosphate)lysine.

It belongs to the GcvP family. The glycine cleavage system is composed of four proteins: P, T, L and H. It depends on pyridoxal 5'-phosphate as a cofactor.

It catalyses the reaction N(6)-[(R)-lipoyl]-L-lysyl-[glycine-cleavage complex H protein] + glycine + H(+) = N(6)-[(R)-S(8)-aminomethyldihydrolipoyl]-L-lysyl-[glycine-cleavage complex H protein] + CO2. Functionally, the glycine cleavage system catalyzes the degradation of glycine. The P protein binds the alpha-amino group of glycine through its pyridoxal phosphate cofactor; CO(2) is released and the remaining methylamine moiety is then transferred to the lipoamide cofactor of the H protein. This is Glycine dehydrogenase (decarboxylating) from Neisseria meningitidis serogroup A / serotype 4A (strain DSM 15465 / Z2491).